Here is a 618-residue protein sequence, read N- to C-terminus: DNA mismatch repair protein MutL (618 aa).

It belongs to the DNA mismatch repair MutL/HexB family.

Functionally, this protein is involved in the repair of mismatches in DNA. It is required for dam-dependent methyl-directed DNA mismatch repair. May act as a 'molecular matchmaker', a protein that promotes the formation of a stable complex between two or more DNA-binding proteins in an ATP-dependent manner without itself being part of a final effector complex. The protein is DNA mismatch repair protein MutL of Porphyromonas gingivalis (strain ATCC BAA-308 / W83).